Consider the following 206-residue polypeptide: Thymidylate kinase (206 aa).

14 to 21 is an ATP binding site; sequence GGEGIGKS.

It belongs to the thymidylate kinase family.

It catalyses the reaction dTMP + ATP = dTDP + ADP. Phosphorylation of dTMP to form dTDP in both de novo and salvage pathways of dTTP synthesis. The sequence is that of Thymidylate kinase from Rickettsia bellii (strain OSU 85-389).